Reading from the N-terminus, the 91-residue chain is MRREALKNAVLKIMTEKMELKNVTHLEETMRLNQDLYIDSVMMLQLIVYIEMDVKLCVPEDEVDPKAFLTVGSLLDFMEELQPLQDVNVNN.

The Carrier domain maps to 4-82 (EALKNAVLKI…SLLDFMEELQ (79 aa)). Ser40 carries the O-(pantetheine 4'-phosphoryl)serine modification.

This sequence belongs to the acyl carrier protein (ACP) family. Post-translationally, activated by the transfer of a 4'-phosphopantetheine group from CoA to Ser-40.

It participates in siderophore biosynthesis; petrobactin biosynthesis. Involved in the biosynthesis of petrobactin, a catecholate siderophore that functions in both iron acquisition and virulence. Aryl-carrier protein that activates 3,4-dihydroxybenzoate (3,4-DHBA) prior to its incorporation into petrobactin. The polypeptide is Acyl carrier protein AsbD (Bacillus anthracis).